The sequence spans 403 residues: Phosphopentomutase (403 aa).

Positions 13, 298, 303, 339, 340, and 351 each coordinate Mn(2+).

Belongs to the phosphopentomutase family. The cofactor is Mn(2+).

It localises to the cytoplasm. It catalyses the reaction 2-deoxy-alpha-D-ribose 1-phosphate = 2-deoxy-D-ribose 5-phosphate. The catalysed reaction is alpha-D-ribose 1-phosphate = D-ribose 5-phosphate. It participates in carbohydrate degradation; 2-deoxy-D-ribose 1-phosphate degradation; D-glyceraldehyde 3-phosphate and acetaldehyde from 2-deoxy-alpha-D-ribose 1-phosphate: step 1/2. In terms of biological role, isomerase that catalyzes the conversion of deoxy-ribose 1-phosphate (dRib-1-P) and ribose 1-phosphate (Rib-1-P) to deoxy-ribose 5-phosphate (dRib-5-P) and ribose 5-phosphate (Rib-5-P), respectively. The protein is Phosphopentomutase of Streptococcus pyogenes serotype M12 (strain MGAS2096).